The chain runs to 546 residues: Glucose-6-phosphate isomerase (546 aa).

The active-site Proton donor is the Glu-358. Active-site residues include His-389 and Lys-504.

The protein belongs to the GPI family.

It is found in the cytoplasm. It catalyses the reaction alpha-D-glucose 6-phosphate = beta-D-fructose 6-phosphate. Its pathway is carbohydrate biosynthesis; gluconeogenesis. The protein operates within carbohydrate degradation; glycolysis; D-glyceraldehyde 3-phosphate and glycerone phosphate from D-glucose: step 2/4. Functionally, catalyzes the reversible isomerization of glucose-6-phosphate to fructose-6-phosphate. This chain is Glucose-6-phosphate isomerase, found in Desulfosudis oleivorans (strain DSM 6200 / JCM 39069 / Hxd3) (Desulfococcus oleovorans).